Here is a 196-residue protein sequence, read N- to C-terminus: Flagellin B2 (196 aa).

Positions 1–12 (MFEFITDEDERG) are excised as a propeptide.

It belongs to the archaeal flagellin family. In terms of processing, glycosylated.

It localises to the archaeal flagellum. Flagellin is the subunit protein which polymerizes to form the filaments of archaeal flagella. This Halobacterium salinarum (strain ATCC 700922 / JCM 11081 / NRC-1) (Halobacterium halobium) protein is Flagellin B2 (flaB2).